The sequence spans 542 residues: Protein phosphatase 1G (542 aa).

Gly-2 carries the N-myristoyl glycine lipid modification. Arg-22 bears the Omega-N-methylarginine mark. The PPM-type phosphatase domain occupies 26–502 (PYGFSAMQGW…DNMTCIIICF (477 aa)). Mn(2+) is bound by residues Asp-60 and Gly-61. Disordered regions lie at residues 117–136 (IAGRPTEDEDDKDKVADEDD) and 164–325 (CQKV…SDSG). Thr-122 carries the phosphothreonine modification. Acidic residues-rich tracts occupy residues 123–136 (EDEDDKDKVADEDD) and 259–309 (DSED…DEEM). Lys-380 is subject to N6-acetyllysine. Residues Asp-438 and Asp-493 each coordinate Mn(2+). The tract at residues 513–542 (ESGKRKLEEALSTEGAEDTGNSDKKKAKRD) is disordered. Ser-524 carries the post-translational modification Phosphoserine.

The protein belongs to the PP2C family. In terms of assembly, interacts with NOL3; may dephosphorylate NOL3. Mg(2+) serves as cofactor. The cofactor is Mn(2+). As to expression, highly expressed in testis. Low level of expression in kidney. Also expressed in a number of tissues undergoing proliferation including embryo, uterus at pregnancy, placenta, and ovaries.

The protein localises to the nucleus. The protein resides in the membrane. The enzyme catalyses O-phospho-L-seryl-[protein] + H2O = L-seryl-[protein] + phosphate. It carries out the reaction O-phospho-L-threonyl-[protein] + H2O = L-threonyl-[protein] + phosphate. May be involved in regulation of cell cycle. This chain is Protein phosphatase 1G (Ppm1g), found in Mus musculus (Mouse).